Reading from the N-terminus, the 49-residue chain is Large ribosomal subunit protein bL33A (49 aa).

This sequence belongs to the bacterial ribosomal protein bL33 family.

In Limosilactobacillus reuteri subsp. reuteri (strain JCM 1112) (Lactobacillus reuteri), this protein is Large ribosomal subunit protein bL33A.